We begin with the raw amino-acid sequence, 486 residues long: Protein nucleotidyltransferase YdiU (486 aa).

8 residues coordinate ATP: Gly-90, Gly-92, Arg-93, Lys-113, Asp-125, Gly-126, Arg-176, and Arg-183. The active-site Proton acceptor is the Asp-252. Mg(2+) is bound by residues Asn-253 and Asp-262. Asp-262 lines the ATP pocket.

Belongs to the SELO family. Mg(2+) is required as a cofactor. It depends on Mn(2+) as a cofactor.

The catalysed reaction is L-seryl-[protein] + ATP = 3-O-(5'-adenylyl)-L-seryl-[protein] + diphosphate. It carries out the reaction L-threonyl-[protein] + ATP = 3-O-(5'-adenylyl)-L-threonyl-[protein] + diphosphate. The enzyme catalyses L-tyrosyl-[protein] + ATP = O-(5'-adenylyl)-L-tyrosyl-[protein] + diphosphate. It catalyses the reaction L-histidyl-[protein] + UTP = N(tele)-(5'-uridylyl)-L-histidyl-[protein] + diphosphate. The catalysed reaction is L-seryl-[protein] + UTP = O-(5'-uridylyl)-L-seryl-[protein] + diphosphate. It carries out the reaction L-tyrosyl-[protein] + UTP = O-(5'-uridylyl)-L-tyrosyl-[protein] + diphosphate. Functionally, nucleotidyltransferase involved in the post-translational modification of proteins. It can catalyze the addition of adenosine monophosphate (AMP) or uridine monophosphate (UMP) to a protein, resulting in modifications known as AMPylation and UMPylation. In Pseudomonas putida (strain GB-1), this protein is Protein nucleotidyltransferase YdiU.